Reading from the N-terminus, the 427-residue chain is MDLLQQLQNQLNQFPSHTKLLLGFSGGLDSTVLLSLLAKLRKKQPHLSLRAIHIHHGLSQNADNWAIHCRQICQQLDISFLCEKVTINPRKGIEADAREARYQAIANHLQDNEILVTAHHQQDQTETFLLALKRGSGLQGLGAMQIQSVVFNLPIFRPLLHCTKQQLEQYAKTEKLSWIEDESNADNRYERNFLRNDILPKLRQRWQSIDNAVQRSAQHCFEQQQLINELLNDEFNKIYDKFDRTLSIANFATYSILKQKALLRTWLQHLHILMPSTIQLDNIMRNMIQAQEDRNPTCRLGNQVLRRYQKRLYATPILQDLSHIRLDIQANECINLPDNLGEICLLTKNEHLQVTWQNKQILLPLTQEKIEIRFRYSGKVKLPQGFHQEMKKCWQDHNVPVWQRTRIPLIFYGNKFKSAVGFFNNCE.

Residue serine 25–serine 30 coordinates ATP.

It belongs to the tRNA(Ile)-lysidine synthase family.

The protein localises to the cytoplasm. The enzyme catalyses cytidine(34) in tRNA(Ile2) + L-lysine + ATP = lysidine(34) in tRNA(Ile2) + AMP + diphosphate + H(+). Its function is as follows. Ligates lysine onto the cytidine present at position 34 of the AUA codon-specific tRNA(Ile) that contains the anticodon CAU, in an ATP-dependent manner. Cytidine is converted to lysidine, thus changing the amino acid specificity of the tRNA from methionine to isoleucine. The protein is tRNA(Ile)-lysidine synthase of Histophilus somni (strain 2336) (Haemophilus somnus).